The following is a 68-amino-acid chain: Small, acid-soluble spore protein I (68 aa).

It belongs to the SspI family.

The protein resides in the spore core. This is Small, acid-soluble spore protein I from Halalkalibacterium halodurans (strain ATCC BAA-125 / DSM 18197 / FERM 7344 / JCM 9153 / C-125) (Bacillus halodurans).